A 343-amino-acid polypeptide reads, in one-letter code: HTH-type transcriptional regulator GntR (343 aa).

Residues 16 to 70 form the HTH lacI-type domain; sequence PTLNEVARRAGVSPITASRALRGVASVAEELAQKVRDAARELGYVANPAARALAS. The H-T-H motif DNA-binding region spans 18–37; that stretch reads LNEVARRAGVSPITASRALR.

Free GntR fails to recognize gluconate and 6-phosphogluconate, whereas the GntR/DNA complexes recognize both ligands. It is therefore likely that GntR DNA binding induces structural changes that permit GntR to recognize effectors. Functionally, involved in the regulation of glucose metabolism. Represses its own expression as well as that of the gluconate permease GntP. It employs an effector mediated de-repression mechanism: in the absence of ligand, GntR binds to the gntR and gntP promoters and represses their expression. The release of promoter bound GntR is induced by gluconate and 6-phosphogluconate that bind with similar apparent affinities to the GntR/DNA complex. The release of GntR leads to transcription of the genes. This is HTH-type transcriptional regulator GntR from Pseudomonas aeruginosa (strain ATCC 15692 / DSM 22644 / CIP 104116 / JCM 14847 / LMG 12228 / 1C / PRS 101 / PAO1).